A 535-amino-acid chain; its full sequence is Light-independent protochlorophyllide reductase subunit B (535 aa).

Asp36 contacts [4Fe-4S] cluster. The active-site Proton donor is Asp292. 428-429 serves as a coordination point for substrate; it reads GL. Residues 447–483 form a disordered region; that stretch reads SDDAAKAEPDQPVSNAHGHTESKTVSQGEPIASDEGG.

It belongs to the ChlB/BchB/BchZ family. In terms of assembly, protochlorophyllide reductase is composed of three subunits; BchL, BchN and BchB. Forms a heterotetramer of two BchB and two BchN subunits. The cofactor is [4Fe-4S] cluster.

It catalyses the reaction chlorophyllide a + oxidized 2[4Fe-4S]-[ferredoxin] + 2 ADP + 2 phosphate = protochlorophyllide a + reduced 2[4Fe-4S]-[ferredoxin] + 2 ATP + 2 H2O. The protein operates within porphyrin-containing compound metabolism; bacteriochlorophyll biosynthesis (light-independent). Functionally, component of the dark-operative protochlorophyllide reductase (DPOR) that uses Mg-ATP and reduced ferredoxin to reduce ring D of protochlorophyllide (Pchlide) to form chlorophyllide a (Chlide). This reaction is light-independent. The NB-protein (BchN-BchB) is the catalytic component of the complex. In Chlorobium phaeobacteroides (strain DSM 266 / SMG 266 / 2430), this protein is Light-independent protochlorophyllide reductase subunit B.